The primary structure comprises 740 residues: Dynein regulatory complex protein 1 (740 aa).

Positions 101-388 (IDIREIHRRV…QFKELQKAMR (288 aa)) form a coiled coil. Positions 570–617 (ASMEKASMEETSTRSELELAEQTEMEGEKEESLVEGEKEEEEETPPSP) are disordered. Residues 575–586 (ASMEETSTRSEL) show a composition bias toward basic and acidic residues. Over residues 587–598 (ELAEQTEMEGEK) the composition is skewed to acidic residues. The stretch at 691–724 (LTQRAKLLLENSSLEQQNTELQALLQQYLNSKIN) forms a coiled coil.

The protein belongs to the DRC1 family. Component of the nexin-dynein regulatory complex (N-DRC). Interacts with CCDC65/DRC2, DRC3, GAS8/DRC4 and TCTE1/DRC5.

The protein localises to the cytoplasm. The protein resides in the cytoskeleton. It localises to the cilium axoneme. It is found in the flagellum axoneme. Functionally, component of the nexin-dynein regulatory complex (N-DRC) a key regulator of ciliary/flagellar motility which maintains the alignment and integrity of the distal axoneme and regulates microtubule sliding in motile axonemes. Plays a critical role in the assembly of N-DRC and also stabilizes the assembly of multiple inner dynein arms and radial spokes. Coassembles with CCDC65/DRC2 to form a central scaffold needed for assembly of the N-DRC and its attachment to the outer doublet microtubules. The protein is Dynein regulatory complex protein 1 (DRC1) of Homo sapiens (Human).